We begin with the raw amino-acid sequence, 645 residues long: Acetyl-coenzyme A synthetase (645 aa).

CoA contacts are provided by residues 190-193 (RGSK), Thr308, and Asn332. ATP-binding positions include 384 to 386 (GEP), 408 to 413 (DTWWQT), Asp497, and Arg512. Position 520 (Ser520) interacts with CoA. Arg523 is a binding site for ATP. Residues Val534, His536, and Val539 each contribute to the Mg(2+) site. Arg581 serves as a coordination point for CoA. Lys606 carries the post-translational modification N6-acetyllysine.

It belongs to the ATP-dependent AMP-binding enzyme family. It depends on Mg(2+) as a cofactor. Post-translationally, acetylated. Deacetylation by the SIR2-homolog deacetylase activates the enzyme.

It catalyses the reaction acetate + ATP + CoA = acetyl-CoA + AMP + diphosphate. In terms of biological role, catalyzes the conversion of acetate into acetyl-CoA (AcCoA), an essential intermediate at the junction of anabolic and catabolic pathways. AcsA undergoes a two-step reaction. In the first half reaction, AcsA combines acetate with ATP to form acetyl-adenylate (AcAMP) intermediate. In the second half reaction, it can then transfer the acetyl group from AcAMP to the sulfhydryl group of CoA, forming the product AcCoA. The polypeptide is Acetyl-coenzyme A synthetase (Bdellovibrio bacteriovorus (strain ATCC 15356 / DSM 50701 / NCIMB 9529 / HD100)).